Reading from the N-terminus, the 340-residue chain is Myomesin-1 (340 aa).

A disordered region spans residues 177–212 (AEKARLKSRPSAPXTGQIIVTEEEPSEEAGTENXQR). Acidic residues predominate over residues 197 to 206 (TEEEPSEEAG).

Homodimer. Interacts with TTN/titin and PNKD. Seems to be expressed in all cardiac and skeletal fibers.

The protein localises to the cytoplasm. It localises to the myofibril. It is found in the sarcomere. The protein resides in the m line. In terms of biological role, major component of the vertebrate myofibrillar M band. Binds myosin, titin, and light meromyosin. This binding is dose dependent. The polypeptide is Myomesin-1 (MYOM1) (Bos taurus (Bovine)).